The primary structure comprises 438 residues: GDP-mannose 6-dehydrogenase (438 aa).

The NAD(+) site is built by Tyr10, Val11, Asp30, Lys35, Thr86, and Thr124. Residues Glu161, Lys210, Asn214, His217, Asn225, Tyr256, Tyr257, Arg259, Phe262, and Gly265 each coordinate GDP-alpha-D-mannuronate. Cys268 is an active-site residue. Lys271 contacts NAD(+). A GDP-alpha-D-mannuronate-binding site is contributed by Lys324. Arg331 contributes to the NAD(+) binding site.

Belongs to the UDP-glucose/GDP-mannose dehydrogenase family.

It catalyses the reaction GDP-alpha-D-mannose + 2 NAD(+) + H2O = GDP-alpha-D-mannuronate + 2 NADH + 3 H(+). It functions in the pathway glycan biosynthesis; alginate biosynthesis. Functionally, catalyzes the oxidation of guanosine diphospho-D-mannose (GDP-D-mannose) to GDP-D-mannuronic acid, a precursor for alginate polymerization. The alginate layer causes a mucoid phenotype and provides a protective barrier against host immune defenses and antibiotics. The protein is GDP-mannose 6-dehydrogenase (algD) of Pseudomonas syringae pv. syringae.